The primary structure comprises 62 residues: Paralithocin 1 (62 aa).

An N-terminal signal peptide occupies residues Met-1 to Ala-23. Intrachain disulfides connect Cys-29/Cys-55, Cys-33/Cys-51, Cys-37/Cys-49, and Cys-42/Cys-52. Tyrosine amide; partial is present on Tyr-61.

Belongs to the paralithocin family. The amidated form is probably the active form.

Has weak antibacterial activity, mainly against marine Gram-positive bacteria like C.maltaromaticum (MIC=200 uM), C.mobile (MIC=100 uM), C.divergens (MIC=200 uM) and C.funditum (MIC=200 uM) but also against C.glutamicum (MIC=50 uM). Has very little or no activity against Gram-negative bacteria. The chain is Paralithocin 1 from Paralithodes camtschaticus (Red king crab).